Reading from the N-terminus, the 86-residue chain is CRISPR-associated endoribonuclease Cas2 (86 aa).

Asp-8 lines the Mg(2+) pocket.

It belongs to the CRISPR-associated endoribonuclease Cas2 protein family. Homodimer, forms a heterotetramer with a Cas1 homodimer. Requires Mg(2+) as cofactor.

Its function is as follows. CRISPR (clustered regularly interspaced short palindromic repeat), is an adaptive immune system that provides protection against mobile genetic elements (viruses, transposable elements and conjugative plasmids). CRISPR clusters contain sequences complementary to antecedent mobile elements and target invading nucleic acids. CRISPR clusters are transcribed and processed into CRISPR RNA (crRNA). Functions as a ssRNA-specific endoribonuclease. Involved in the integration of spacer DNA into the CRISPR cassette. Plasmid targeted by CRISPR locus P1 transform wild-type cells very poorly. This chain is CRISPR-associated endoribonuclease Cas2, found in Haloferax volcanii (strain ATCC 29605 / DSM 3757 / JCM 8879 / NBRC 14742 / NCIMB 2012 / VKM B-1768 / DS2) (Halobacterium volcanii).